The sequence spans 294 residues: uncharacterized protein (294 aa).

The signal sequence occupies residues M1 to A18.

This is an uncharacterized protein from Rickettsia bellii (strain RML369-C).